The following is a 475-amino-acid chain: Chromosomal replication initiator protein DnaA (475 aa).

A domain I, interacts with DnaA modulators region spans residues 1 to 73 (MSDTEQERWS…LSCWQAELPD (73 aa)). Residues 73–131 (DVHRIDLTVRSAMRCAAPVREAPATDARHPERSEGRNGVELKTVATAPASANHDALGGS) form a domain II region. Residues 132–354 (PLDPRLTFQS…GAINRLLAHS (223 aa)) form a domain III, AAA+ region region. ATP is bound by residues Gly179, Gly181, Lys182, and Thr183. Residues 355-475 (KLNAQPVTLE…VELLKRQLQE (121 aa)) form a domain IV, binds dsDNA region.

Belongs to the DnaA family. In terms of assembly, oligomerizes as a right-handed, spiral filament on DNA at oriC.

It is found in the cytoplasm. Functionally, plays an essential role in the initiation and regulation of chromosomal replication. ATP-DnaA binds to the origin of replication (oriC) to initiate formation of the DNA replication initiation complex once per cell cycle. Binds the DnaA box (a 9 base pair repeat at the origin) and separates the double-stranded (ds)DNA. Forms a right-handed helical filament on oriC DNA; dsDNA binds to the exterior of the filament while single-stranded (ss)DNA is stabiized in the filament's interior. The ATP-DnaA-oriC complex binds and stabilizes one strand of the AT-rich DNA unwinding element (DUE), permitting loading of DNA polymerase. After initiation quickly degrades to an ADP-DnaA complex that is not apt for DNA replication. Binds acidic phospholipids. In Nitrobacter winogradskyi (strain ATCC 25391 / DSM 10237 / CIP 104748 / NCIMB 11846 / Nb-255), this protein is Chromosomal replication initiator protein DnaA.